A 33-amino-acid polypeptide reads, in one-letter code: Suppressor protein HFN40 (33 aa).

Its function is as follows. Suppresses expansion of husk leaf blades. This Zea mays (Maize) protein is Suppressor protein HFN40.